Reading from the N-terminus, the 688-residue chain is Coiled-coil domain-containing protein 157 (688 aa).

Polar residues predominate over residues 143–153; it reads ANQGETLTSKP. 5 disordered regions span residues 143-162, 168-189, 322-341, 366-385, and 592-688; these read ANQG…PAGS, AQLV…ERDS, QAAR…QWER, QQRE…QAEA, and QGAE…ERPT. A coiled-coil region spans residues 288-572; that stretch reads KLVGLLRAQL…LSKIREVAQQ (285 aa). A compositionally biased stretch (polar residues) spans 369–382; that stretch reads ESTQAVESKAQQLQ. Over residues 671–680 the composition is skewed to low complexity; that stretch reads SPSSGRASPA.

This Bos taurus (Bovine) protein is Coiled-coil domain-containing protein 157 (CCDC157).